The sequence spans 371 residues: Putative RNA-binding protein Luc7-like 1 (371 aa).

2 coiled-coil regions span residues 87 to 177 and 220 to 256; these read MDHL…RNSM and QIRE…EERL. Residues 232 to 257 are compositionally biased toward basic and acidic residues; it reads VAEKQEKRNQDRLRRREEREREERLG. The interval 232–371 is disordered; it reads VAEKQEKRNQ…RSEEKEAGEI (140 aa). The segment covering 258–317 has biased composition (basic residues); sequence RRSGSRTRDRRRSRSRDRRRRRSRSTSRERRKFSRSRSRDRYRRHRSRSRSHSRGHRRAS. 2 stretches are compositionally biased toward basic and acidic residues: residues 318–351 and 361–371; these read RDRS…DWRL and RRSEEKEAGEI. Residues S336 and S363 each carry the phosphoserine modification.

The protein belongs to the Luc7 family.

In terms of biological role, may bind to RNA via its Arg/Ser-rich domain. This chain is Putative RNA-binding protein Luc7-like 1 (Luc7l), found in Mus musculus (Mouse).